A 225-amino-acid chain; its full sequence is Cytidylate kinase (225 aa).

Position 11–19 (11–19) interacts with ATP; it reads GPAAAGKST.

This sequence belongs to the cytidylate kinase family. Type 1 subfamily.

It is found in the cytoplasm. It carries out the reaction CMP + ATP = CDP + ADP. The catalysed reaction is dCMP + ATP = dCDP + ADP. This chain is Cytidylate kinase, found in Bacillus pumilus (strain SAFR-032).